A 1350-amino-acid polypeptide reads, in one-letter code: ABC-type transporter MDR1 (1350 aa).

Over residues 1–11 (MDTVHEGHHGS) the composition is skewed to basic and acidic residues. A disordered region spans residues 1 to 84 (MDTVHEGHHG…DEGEDPFAHL (84 aa)). Residues 22–33 (VEVTNYEKTQLG) are compositionally biased toward polar residues. Basic residues predominate over residues 52–63 (KKHKSQKEKKHK). An ABC transmembrane type-1 1 domain is found at 121 to 411 (VLSALSSIIG…VAPNIQAFTT (291 aa)). The next 6 helical transmembrane spans lie at 124 to 144 (ALSS…FGGL), 170 to 190 (LYFL…TAGF), 243 to 263 (KVGL…VSFI), 271 to 291 (ILMS…GFIV), 350 to 370 (GSMI…AFWM), and 380 to 400 (IEVG…FALG). The ABC transporter 1 domain occupies 446 to 691 (IELRNIRHIY…QGAYYNLVEA (246 aa)). Position 481-488 (481-488 (GESGSGKS)) interacts with ATP. Residues 712-731 (KDQNLKHETTKGEQPEDGLK) are compositionally biased toward basic and acidic residues. The interval 712 to 734 (KDQNLKHETTKGEQPEDGLKLAR) is disordered. Transmembrane regions (helical) follow at residues 779–799 (IGII…VFFA), 830–850 (FMLA…FAVC), 903–923 (LGTI…SLAI), 929–949 (LVCI…FWML), 1014–1034 (ASQS…GTLI), and 1044–1064 (FFLC…IFSF). An ABC transmembrane type-1 2 domain is found at 779-1070 (IGIICSVITG…IFSFAPDMGK (292 aa)). Positions 1105–1343 (IEFRDVHFRY…RGRYWELVNL (239 aa)) constitute an ABC transporter 2 domain. Residue asparagine 1127 is glycosylated (N-linked (GlcNAc...) asparagine). 1140–1147 (GASGCGKS) is an ATP binding site.

Belongs to the ABC transporter superfamily. ABCB family. Multidrug resistance exporter (TC 3.A.1.201) subfamily.

The protein localises to the cell membrane. In terms of biological role, ABC-type transporter that is involved in the secretion of liamocins, glycolipids (also called heavy oils) composed of a single mannitol or arabitol headgroup linked to either three, four or even six 3,5-dihydroxydecanoic ester tail-groups. This is ABC-type transporter MDR1 from Aureobasidium melanogenum (Aureobasidium pullulans var. melanogenum).